Here is a 66-residue protein sequence, read N- to C-terminus: Large ribosomal subunit protein uL29 (66 aa).

It belongs to the universal ribosomal protein uL29 family.

This Rhizobium leguminosarum bv. trifolii (strain WSM2304) protein is Large ribosomal subunit protein uL29.